Here is an 820-residue protein sequence, read N- to C-terminus: Leucine--tRNA ligase (820 aa).

The 'HIGH' region signature appears at 42–52; that stretch reads PYPSGDLHMGH. Residues 576-580 carry the 'KMSKS' region motif; sequence KMSKS. An ATP-binding site is contributed by Lys-579.

Belongs to the class-I aminoacyl-tRNA synthetase family.

Its subcellular location is the cytoplasm. It catalyses the reaction tRNA(Leu) + L-leucine + ATP = L-leucyl-tRNA(Leu) + AMP + diphosphate. The sequence is that of Leucine--tRNA ligase from Coxiella burnetii (strain RSA 331 / Henzerling II).